Here is a 155-residue protein sequence, read N- to C-terminus: D-aminoacyl-tRNA deacylase (155 aa).

Residues Gly-137–Pro-138 carry the Gly-cisPro motif, important for rejection of L-amino acids motif.

This sequence belongs to the DTD family. As to quaternary structure, homodimer.

The protein localises to the cytoplasm. It carries out the reaction glycyl-tRNA(Ala) + H2O = tRNA(Ala) + glycine + H(+). It catalyses the reaction a D-aminoacyl-tRNA + H2O = a tRNA + a D-alpha-amino acid + H(+). In terms of biological role, an aminoacyl-tRNA editing enzyme that deacylates mischarged D-aminoacyl-tRNAs. Also deacylates mischarged glycyl-tRNA(Ala), protecting cells against glycine mischarging by AlaRS. Acts via tRNA-based rather than protein-based catalysis; rejects L-amino acids rather than detecting D-amino acids in the active site. By recycling D-aminoacyl-tRNA to D-amino acids and free tRNA molecules, this enzyme counteracts the toxicity associated with the formation of D-aminoacyl-tRNA entities in vivo and helps enforce protein L-homochirality. The polypeptide is D-aminoacyl-tRNA deacylase (Nitrosococcus oceani (strain ATCC 19707 / BCRC 17464 / JCM 30415 / NCIMB 11848 / C-107)).